We begin with the raw amino-acid sequence, 706 residues long: Transcription factor 12 (706 aa).

The interval 25-109 is disordered; that stretch reads AMFSPPVNSG…TPFMNSNLIG (85 aa). Composition is skewed to polar residues over residues 30-48 and 56-76; these read PVNS…QFSG and GTTS…SRGF. Phosphoserine is present on residues Ser47, Ser67, and Ser79. The span at 81–93 shows a compositional bias: basic and acidic residues; it reads HYSDHLNDSRLGT. At Ser98 the chain carries Phosphoserine. A Glycyl lysine isopeptide (Lys-Gly) (interchain with G-Cter in SUMO2) cross-link involves residue Lys110. 2 positions are modified to phosphoserine: Ser116 and Ser124. The segment at 119–140 is leucine-zipper; the sequence is LYSRDSGLSGCQSSLLRQDLGL. 2 disordered regions span residues 140–222 and 249–313; these read LGSP…SMFA and FGGI…ASHT. Residues 144–163 are compositionally biased toward polar residues; sequence AQLSSSGKPGTPYYSFSATS. A Glycyl lysine isopeptide (Lys-Gly) (interchain with G-Cter in SUMO2) cross-link involves residue Lys181. The Nuclear localization signal motif lies at 181-188; the sequence is KKVRKVPP. Residues 256–269 show a composition bias toward low complexity; sequence STSHMSQSSSYGSL. Over residues 282 to 306 the composition is skewed to polar residues; sequence VSPTDINTSLPPMSSFHRGSTSSSP. Thr313 carries the phosphothreonine modification. At Ser333 the chain carries Phosphoserine. Disordered stretches follow at residues 349–392 and 520–604; these read PDHT…YENS and HKTP…ERRM. A compositionally biased stretch (low complexity) spans 352–363; that stretch reads TSSSFPSNPSTP. Polar residues-rich tracts occupy residues 364 to 376 and 383 to 392; these read VGSP…TSQW and APSSPSYENS. Phosphoserine is present on Ser392. Composition is skewed to basic and acidic residues over residues 542–554 and 560–575; these read IKTE…ENLH and DDMK…DIKV. A Glycyl lysine isopeptide (Lys-Gly) (interchain with G-Cter in SUMO2) cross-link involves residue Lys543. At Ser564 the chain carries Phosphoserine. A Glycyl lysine isopeptide (Lys-Gly) (interchain with G-Cter in SUMO2) cross-link involves residue Lys574. A Phosphothreonine modification is found at Thr581. Phosphoserine occurs at positions 582 and 583. The span at 592 to 604 shows a compositional bias: basic and acidic residues; it reads PEQKIEREKERRM. The bHLH domain maps to 601-654; the sequence is ERRMANNARERLRVRDINEAFKELGRMCQLHLKSEKPQTKLLILHQAVAVILSL. Glycyl lysine isopeptide (Lys-Gly) (interchain with G-Cter in SUMO2) cross-links involve residues Lys633 and Lys677. The tract at residues 656-679 is class A specific domain; the sequence is QQVRERNLNPKAACLKRREEEKVS. Residues 674–706 are disordered; the sequence is EEEKVSAASAEPPNTLPGAHPGLSESTNPMGHL. Over residues 697-706 the composition is skewed to polar residues; sequence SESTNPMGHL.

As to quaternary structure, efficient DNA binding requires dimerization with another bHLH protein. Forms homo- or heterooligomers with myogenin, E12 and ITF2 proteins and RUNX1T1. Interacts with PTF1A. Interacts with NEUROD2. Interacts with BHLHA9. As to expression, widely expressed.

It is found in the nucleus. Functionally, transcriptional regulator. Involved in the initiation of neuronal differentiation. Activates transcription by binding to the E box (5'-CANNTG-3'). May be involved in the functional network that regulates the development of the GnRH axis. The polypeptide is Transcription factor 12 (Tcf12) (Mus musculus (Mouse)).